Consider the following 517-residue polypeptide: GMP synthase [glutamine-hydrolyzing] (517 aa).

One can recognise a Glutamine amidotransferase type-1 domain in the interval 9–199; sequence RILILDFGSQ…VLGVCGCERL (191 aa). Cys86 acts as the Nucleophile in catalysis. Catalysis depends on residues His173 and Glu175. Residues 200 to 392 enclose the GMPS ATP-PPase domain; the sequence is WTSESIIEDA…LGLPYNMLYR (193 aa). 227 to 233 is an ATP binding site; that stretch reads SGGVDSS.

Homodimer.

It carries out the reaction XMP + L-glutamine + ATP + H2O = GMP + L-glutamate + AMP + diphosphate + 2 H(+). The protein operates within purine metabolism; GMP biosynthesis; GMP from XMP (L-Gln route): step 1/1. Functionally, catalyzes the synthesis of GMP from XMP. The chain is GMP synthase [glutamine-hydrolyzing] from Vibrio parahaemolyticus serotype O3:K6 (strain RIMD 2210633).